A 349-amino-acid chain; its full sequence is C-X-C chemokine receptor type 4 (349 aa).

An important for chemokine binding and signaling region spans residues 1–18 (MEIYTSDNYSEEVGSGDY). Residues 1–23 (MEIYTSDNYSEEVGSGDYDSNKE) are disordered. The Extracellular portion of the chain corresponds to 1 to 35 (MEIYTSDNYSEEVGSGDYDSNKEPCFRDENENFNR). Asn8 carries an N-linked (GlcNAc...) asparagine glycan. At Tyr9 the chain carries Sulfotyrosine. O-linked (Xyl...) (chondroitin sulfate) serine glycosylation is present at Ser15. The residue at position 18 (Tyr18) is a Sulfotyrosine. 2 disulfide bridges follow: Cys25-Cys271 and Cys106-Cys183. Residues 36-60 (IFLPTIYFIIFLTGIVGNGLVILVM) traverse the membrane as a helical segment. Residues 61–74 (GYQKKLRSMTDKYR) are Cytoplasmic-facing. Residues 75–96 (LHLSVADLLFVITLPFWAVDAM) form a helical membrane-spanning segment. A chemokine binding region spans residues 91–94 (WAVD). At 97 to 107 (ADWYFGKFLCK) the chain is on the extracellular side. The helical transmembrane segment at 108-127 (AVHIIYTVNLYSSVLILAFI) threads the bilayer. The chemokine binding stretch occupies residues 110 to 114 (HIIYT). At 128–151 (SLDRYLAIVHATNSQRPRKLLAEK) the chain is on the cytoplasmic side. An Important for signaling motif is present at residues 130–132 (DRY). The tract at residues 132–144 (YLAIVHATNSQRP) is involved in dimerization; when bound to chemokine. Residues 152-171 (AVYVGVWIPALLLTIPDIIF) form a helical membrane-spanning segment. Over 172 to 192 (ADVSQGDGRYICDRLYPDSLW) the chain is Extracellular. The chemokine binding, important for signaling stretch occupies residues 183–187 (CDRLY). The tract at residues 188-207 (PDSLWMVVFQFQHIMVGLIL) is involved in dimerization. Residues 193-213 (MVVFQFQHIMVGLILPGIVIL) form a helical membrane-spanning segment. The Cytoplasmic segment spans residues 214–238 (SCYCIIISKLSHSKGHQKRKALKTT). Residues 239–258 (VILILAFFACWLPYYVGISI) traverse the membrane as a helical segment. Over 259 to 279 (DSFILLEVIKQGCEFESVVHK) the chain is Extracellular. The tract at residues 263–265 (LLE) is involved in dimerization. A helical membrane pass occupies residues 280–299 (WISITEALAFFHCCLNPILY). Residues 300–349 (AFLGAKFKSSAQHALNSMSRGSSLKILSKGKRGGHSSVSTESESSSFHSS) are Cytoplasmic-facing. Phosphoserine occurs at positions 316 and 318. Residues Ser321 and Ser322 each carry the phosphoserine; by PKC and GRK6 modification. Residues 325 to 349 (ILSKGKRGGHSSVSTESESSSFHSS) form a disordered region. Ser327 is subject to Phosphoserine; by GRK6. Residue Lys328 forms a Glycyl lysine isopeptide (Lys-Gly) (interchain with G-Cter in ubiquitin) linkage. Low complexity predominate over residues 334–349 (HSSVSTESESSSFHSS). Ser336 bears the Phosphoserine; by GRK6 mark. Phosphoserine occurs at positions 345 and 348.

This sequence belongs to the G-protein coupled receptor 1 family. As to quaternary structure, monomer. Can form homodimers. Interacts with CD164. Interacts with ARRB2; the interaction is dependent on the C-terminal phosphorylation of CXCR4 and allows activation of MAPK1 and MAPK3. Interacts with ARR3; the interaction is dependent on the C-terminal phosphorylation of CXCR4 and modulates calcium mobilization. Interacts with RNF113A; the interaction, enhanced by CXCL12, promotes CXCR4 ubiquitination and subsequent degradation. Interacts (via the cytoplasmic C-terminal) with ITCH (via the WW domains I and II); the interaction, enhanced by CXCL12, promotes CXCR4 ubiquitination and leads to its degradation. Interacts with extracellular ubiquitin. Interacts with DBN1; this interaction is enhanced by antigenic stimulation. Following LPS binding, may form a complex with GDF5, HSP90AA1 and HSPA8. Post-translationally, phosphorylated on agonist stimulation. Rapidly phosphorylated on serine and threonine residues in the C-terminal. Phosphorylation at Ser-321 and Ser-322 leads to recruitment of ITCH, ubiquitination and protein degradation. Ubiquitinated after ligand binding, leading to its degradation. Ubiquitinated by ITCH at the cell membrane on agonist stimulation. The ubiquitin-dependent mechanism, endosomal sorting complex required for transport (ESCRT), then targets CXCR4 for lysosomal degradation. This process is dependent also on prior Ser-/Thr-phosphorylation in the C-terminal of CXCR4. Also binding of ARRB1 to STAM negatively regulates CXCR4 sorting to lysosomes though modulating ubiquitination of SFR5S. In terms of processing, sulfation is required for efficient binding of CXCL12/SDF-1alpha and promotes its dimerization. Post-translationally, O- and N-glycosylated. N-glycosylation can mask coreceptor function. The O-glycosylation chondroitin sulfate attachment does not affect interaction with CXCL12/SDF-1alpha nor its coreceptor activity.

It is found in the cell membrane. The protein localises to the cell junction. The protein resides in the early endosome. Its subcellular location is the late endosome. It localises to the lysosome. Functionally, receptor for the C-X-C chemokine CXCL12/SDF-1 that transduces a signal by increasing intracellular calcium ion levels and enhancing MAPK1/MAPK3 activation. Involved in the AKT signaling cascade. Plays a role in regulation of cell migration, e.g. during wound healing. Acts as a receptor for extracellular ubiquitin; leading to enhanced intracellular calcium ions and reduced cellular cAMP levels. Binds bacterial lipopolysaccharide (LPS) et mediates LPS-induced inflammatory response, including TNF secretion by monocytes. Involved in hematopoiesis and in cardiac ventricular septum formation. Also plays an essential role in vascularization of the gastrointestinal tract, probably by regulating vascular branching and/or remodeling processes in endothelial cells. Involved in cerebellar development. In the CNS, could mediate hippocampal-neuron survival. This Rattus norvegicus (Rat) protein is C-X-C chemokine receptor type 4 (Cxcr4).